A 499-amino-acid polypeptide reads, in one-letter code: Patatin-like protein 6 (499 aa).

A PNPLA domain is found at 111-314 (LSIDSGGMRG…AMSNPTAAAI (204 aa)). The GGXR signature appears at 116–119 (GGMR). Ser155 (nucleophile) is an active-site residue. The active-site Proton acceptor is the Asp301. The DGA/G signature appears at 301 to 303 (DGG).

This sequence belongs to the patatin family. Highly expressed in siliques and at lower levels in roots and flowers.

In terms of biological role, possesses non-specific lipolytic acyl hydrolase (LAH) activity. Hydrolyzes phospholipids as well as galactolipids. May play a role in disease resistance. The polypeptide is Patatin-like protein 6 (PLP6) (Arabidopsis thaliana (Mouse-ear cress)).